A 137-amino-acid chain; its full sequence is Putative pre-16S rRNA nuclease (137 aa).

It belongs to the YqgF nuclease family.

Its subcellular location is the cytoplasm. Could be a nuclease involved in processing of the 5'-end of pre-16S rRNA. This Clostridium perfringens (strain ATCC 13124 / DSM 756 / JCM 1290 / NCIMB 6125 / NCTC 8237 / Type A) protein is Putative pre-16S rRNA nuclease.